The following is a 100-amino-acid chain: Cell division protein FtsB (100 aa).

Residues 1–3 lie on the Cytoplasmic side of the membrane; sequence MKW. The helical transmembrane segment at 4–21 threads the bilayer; sequence LAIILVVALLALQYRLWM. Topologically, residues 22–100 are periplasmic; it reads GEGSIASVVS…TDKDTKKNKK (79 aa). A coiled-coil region spans residues 26–73; that stretch reads IASVVSLNREIAKQKEENARLRERNRLLAAEVDALKQGKDAIEERARN.

Belongs to the FtsB family. As to quaternary structure, part of a complex composed of FtsB, FtsL and FtsQ.

Its subcellular location is the cell inner membrane. In terms of biological role, essential cell division protein. May link together the upstream cell division proteins, which are predominantly cytoplasmic, with the downstream cell division proteins, which are predominantly periplasmic. This chain is Cell division protein FtsB, found in Saccharophagus degradans (strain 2-40 / ATCC 43961 / DSM 17024).